We begin with the raw amino-acid sequence, 765 residues long: E3 ubiquitin-protein ligase SlrP (765 aa).

Residues 1 to 451 (MFNITNIQST…VDYQGPRVLF (451 aa)) are interaction with target proteins. LRR repeat units follow at residues 200-219 (QITT…ENLQ), 221-242 (NIKT…LPDT), 243-262 (IQEM…RLPS), 263-284 (ALQS…LPEE), 285-305 (LRYL…LPSG), 306-325 (ITHL…TLPP), 326-346 (GLKT…SLPP), 347-368 (ELQV…LPPT), 369-389 (ITTL…LPAA), and 390-410 (LQIM…LPHF). A linker region spans residues 452 to 461 (AMGDFSIVRV). The segment at 462-765 (TRPLHQAVQG…VSSLMSAYWR (304 aa)) is E3 ubiquitin-protein ligase catalytic domain. Residues 464 to 758 (PLHQAVQGWL…NILLKKEVSS (295 aa)) form the NEL domain. Residue C546 is the Glycyl thioester intermediate of the active site.

The protein belongs to the LRR-containing bacterial E3 ligase family. In terms of assembly, interacts with host TXN. Ubiquitinated in the presence of host E1 ubiquitin-activating enzyme, E2 ubiquitin-conjugating enzyme and ubiquitin.

The protein resides in the secreted. It localises to the host cytoplasm. The enzyme catalyses S-ubiquitinyl-[E2 ubiquitin-conjugating enzyme]-L-cysteine + [acceptor protein]-L-lysine = [E2 ubiquitin-conjugating enzyme]-L-cysteine + N(6)-ubiquitinyl-[acceptor protein]-L-lysine.. Its activity is regulated as follows. Binding to TXN is inhibited by hydrogen peroxide in vitro. Functionally, effector proteins function to alter host cell physiology and promote bacterial survival in host tissues. This protein is an E3 ubiquitin ligase that interferes with host's ubiquitination pathway. Can ubiquitinate both ubiquitin and host TXN (thioredoxin). Leads to significant decrease of thioredoxin activity and increase of host cell death. The chain is E3 ubiquitin-protein ligase SlrP (slrP) from Salmonella typhimurium (strain LT2 / SGSC1412 / ATCC 700720).